Here is a 154-residue protein sequence, read N- to C-terminus: SsrA-binding protein (154 aa).

The protein belongs to the SmpB family.

The protein localises to the cytoplasm. Its function is as follows. Required for rescue of stalled ribosomes mediated by trans-translation. Binds to transfer-messenger RNA (tmRNA), required for stable association of tmRNA with ribosomes. tmRNA and SmpB together mimic tRNA shape, replacing the anticodon stem-loop with SmpB. tmRNA is encoded by the ssrA gene; the 2 termini fold to resemble tRNA(Ala) and it encodes a 'tag peptide', a short internal open reading frame. During trans-translation Ala-aminoacylated tmRNA acts like a tRNA, entering the A-site of stalled ribosomes, displacing the stalled mRNA. The ribosome then switches to translate the ORF on the tmRNA; the nascent peptide is terminated with the 'tag peptide' encoded by the tmRNA and targeted for degradation. The ribosome is freed to recommence translation, which seems to be the essential function of trans-translation. The polypeptide is SsrA-binding protein (Methylobacillus flagellatus (strain ATCC 51484 / DSM 6875 / VKM B-1610 / KT)).